The chain runs to 684 residues: Cyclic nucleotide-gated channel alpha-1 (684 aa).

The Cytoplasmic segment spans residues 1-161 (MKTNIINTWH…PSGNTYYNWL (161 aa)). The disordered stretch occupies residues 34–145 (ACSSFSDDDN…TKEKKEEEKK (112 aa)). Residues 39–54 (SDDDNGSLSEESENED) show a composition bias toward acidic residues. Residues 105-145 (SKADDKNENKKDPEKKKKKEKEKEKKKKEEKTKEKKEEEKK) show a composition bias toward basic and acidic residues. A helical transmembrane segment spans residues 162–183 (FCITLPVMYNWTMIIARACFDE). At 184–193 (LQSDYLEYWL) the chain is on the extracellular side. A helical membrane pass occupies residues 194–214 (IFDYVSDVVYLADMFVRTRTG). Over 215–239 (YLEQGLLVKDRMKLIEKYKANLQFK) the chain is Cytoplasmic. The helical transmembrane segment at 240–258 (LDVLSVIPTDLLYIKFGWN) threads the bilayer. At 259 to 263 (YPEIR) the chain is on the extracellular side. Residues 264 to 282 (LNRLLRISRMFEFFQRTET) form a helical membrane-spanning segment. Over 283 to 289 (RTNYPNI) the chain is Cytoplasmic. The ion conduction pathway stretch occupies residues 287 to 395 (PNIFRISNLV…GNIGSMISNM (109 aa)). The chain crosses the membrane as a helical span at residues 290 to 313 (FRISNLVMYIVIIIHWNACVYYSI). Residues 314 to 336 (SKAIGFGNDTWVYPDVNDPEFGR) lie on the Extracellular side of the membrane. The N-linked (GlcNAc...) asparagine glycan is linked to N321. The next 2 helical transmembrane spans lie at 337-371 (LARK…IFVV) and 372-396 (VDFL…SNMN). Residues 354–357 (TIGE) form a selectivity filter region. The tract at residues 397-473 (AARAEFQSRV…DTLKKVRIFA (77 aa)) is C-linker. Topologically, residues 397 to 684 (AARAEFQSRV…ESELTESLQD (288 aa)) are cytoplasmic. The tract at residues 477–597 (AGLLVELVLK…EEKGRQILMK (121 aa)) is cyclic nucleotide-binding domain. 4 residues coordinate 3',5'-cyclic GMP: G537, S540, R553, and T554. 3',5'-cyclic AMP contacts are provided by R553 and T554. Residues 615-669 (LEEKVTRMEGSVDLLQTRFARILAEYESMQQKLKQRLTKVEKFLKPLIETEFSAL) are a coiled coil.

Belongs to the cyclic nucleotide-gated cation channel (TC 1.A.1.5) family. CNGA1 subfamily. Forms heterotetrameric channels composed of CNGA1 and CNGB1 subunits with 3:1 stoichiometry. May also form cyclic nucleotide-activated homotetrameric channels, that are efficiently activated by saturating cGMP, but poorly activated by saturating cAMP compared to the heterotetramer with CNGB1. The channel binds Ca(2+)-bound CALM1 via CaM1 and CaM2 regions of the CNGB1 subunit; this interaction modulates the affinity of the channel for cNMPs in response to intracellular Ca(2+) levels. Rod cells in the retina and inner medulla of kidney.

It localises to the cell membrane. It catalyses the reaction Ca(2+)(in) = Ca(2+)(out). It carries out the reaction Na(+)(in) = Na(+)(out). The enzyme catalyses K(+)(in) = K(+)(out). The catalysed reaction is NH4(+)(in) = NH4(+)(out). It catalyses the reaction Rb(+)(in) = Rb(+)(out). It carries out the reaction Li(+)(in) = Li(+)(out). The enzyme catalyses Cs(+)(in) = Cs(+)(out). Its function is as follows. Pore-forming subunit of the rod cyclic nucleotide-gated channel. Mediates rod photoresponses at dim light converting transient changes in intracellular cGMP levels into electrical signals. In the dark, cGMP levels are high and keep the channel open enabling a steady inward current carried by Na(+) and Ca(2+) ions that leads to membrane depolarization and neurotransmitter release from synaptic terminals. Upon photon absorption cGMP levels decline leading to channel closure and membrane hyperpolarization that ultimately slows neurotransmitter release and signals the presence of light, the end point of the phototransduction cascade. Conducts cGMP- and cAMP-gated ion currents, with permeability for monovalent and divalent cations. The selectivity for Ca(2+) over Na(+) increases with cGMP concentrations, whereas the selectivity among monovalent ions is independent of the cGMP levels. The chain is Cyclic nucleotide-gated channel alpha-1 (Cnga1) from Mus musculus (Mouse).